The following is a 950-amino-acid chain: MGVPAFFRWLSRKYPSIIVNCVEEKPKECNGVKIPVDASKPNPNDVEFDNLYLDMNGIIHPCTHPEDKPAPKNEDEMMVAIFEYIDRLFSIVRPRRLLYMAIDGVAPRAKMNQQRSRRFRASKEGMEAAVEKQRVREEILAKGGFLPPEEIKERFDSNCITPGTEFMDNLAKCLRYYIADRLNNDPGWKNLTVILSDASAPGEGEHKIMDYIRRQRAQPNHDPNTHHCLCGADADLIMLGLATHEPNFTIIREEFKPNKPKPCGLCNQFGHEVKDCEGLPREKKGKHDELADSLPCAEGEFIFLRLNVLREYLERELTMASLPFTFDVERSIDDWVFMCFFVGNDFLPHLPSLEIRENAIDRLVNIYKNVVHKTGGYLTESGYVNLQRVQMIMLAVGEVEDSIFKKRKDDEDSFRRRQKEKRKRMKRDQPAFTPSGILTPHALGSRNSPGSQVASNPRQAAYEMRMQNNSSPSISPNTSFTSDGSPSPLGGIKRKAEDSDSEPEPEDNVRLWEAGWKQRYYKNKFDVDAADEKFRRKVVQSYVEGLCWVLRYYYQGCASWKWYYPFHYAPFASDFEGIADMPSDFEKGTKPFKPLEQLMGVFPAASGNFLPPSWRKLMSDPDSSIIDFYPEDFAIDLNGKKYAWQGVALLPFVDERRLRAALEEVYPDLTPEETRRNSLGGDVLFVGKHHPLHDFILELYQTGSTEPVEVPPELCHGIQGKFSLDEEAILPDQIVCSPVPMLRDLTQNTVVSINFKDPQFAEDYIFKAVMLPGARKPAAVLKPSDWEKSSNGRQWKPQLGFNRDRRPVHLDQAAFRTLGHVMPRGSGTGIYSNAAPPPVTYQGNLYRPLLRGQAQIPKLMSNMRPQDSWRGPPPLFQQQRFDRGVGAEPLLPWNRMLQTQNAAFQPNQYQMLAGPGGYPPRRDDRGGRQGYPREGRKYPLPPPSGRYNWN.

The segment at 262–278 (PCGLCNQFGHEVKDCEG) adopts a CCHC-type zinc-finger fold. K286 is subject to N6-acetyllysine. The disordered stretch occupies residues 408-508 (KDDEDSFRRR…SDSEPEPEDN (101 aa)). Positions 416 to 426 (RRQKEKRKRMK) are enriched in basic residues. T439 carries the post-translational modification Phosphothreonine. The span at 445 to 458 (SRNSPGSQVASNPR) shows a compositional bias: polar residues. 9 positions are modified to phosphoserine: S448, S471, S473, S475, S482, S487, S499, S501, and S678. Positions 468-482 (NNSSPSISPNTSFTS) are enriched in low complexity. Residues R824, R847, and R851 each carry the asymmetric dimethylarginine; alternate modification. Residues R824, R847, and R851 each carry the omega-N-methylarginine; alternate modification. R880 is subject to Asymmetric dimethylarginine. R883 bears the Asymmetric dimethylarginine; alternate mark. R883 bears the Omega-N-methylarginine; alternate mark. The residue at position 895 (R895) is an Omega-N-methylarginine. Residues 911-950 (MLAGPGGYPPRRDDRGGRQGYPREGRKYPLPPPSGRYNWN) are disordered. Over residues 920 to 937 (PRRDDRGGRQGYPREGRK) the composition is skewed to basic and acidic residues. Asymmetric dimethylarginine; alternate is present on R946. R946 is modified (omega-N-methylarginine; alternate).

The protein belongs to the 5'-3' exonuclease family. XRN2/RAT1 subfamily. In terms of assembly, interacts with POLR2A and SMN1/SMN2. Interacts with CDKN2AIP and NKRF. Interacts with CDKN2AIPNL; the interaction is direct. Interacts with TRIM71 (via NHL repeats) in an RNA-dependent manner. Interacts with DHX34; the interaction is RNA-independent. As to expression, expressed in the spleen, thymus, prostate, testis, ovary, small intestine, colon, peripheral blood leukocytes, heart, brain, placenta, lung, liver, skeletal muscle, kidney, and pancreas. Isoform 2 is expressed predominantly in peripheral blood leukocytes.

It is found in the nucleus. The protein resides in the nucleolus. In terms of biological role, possesses 5'-&gt;3' exoribonuclease activity. May promote the termination of transcription by RNA polymerase II. During transcription termination, cleavage at the polyadenylation site liberates a 5' fragment which is subsequently processed to form the mature mRNA and a 3' fragment which remains attached to the elongating polymerase. The processive degradation of this 3' fragment by this protein may promote termination of transcription. Binds to RNA polymerase II (RNAp II) transcription termination R-loops formed by G-rich pause sites. The sequence is that of 5'-3' exoribonuclease 2 (XRN2) from Homo sapiens (Human).